A 62-amino-acid chain; its full sequence is Photosystem II reaction center protein Z (62 aa).

Transmembrane regions (helical) follow at residues 8 to 28 (ALFALIATSFLLVVGVPVAFA) and 41 to 61 (FSGASLWIGLVFLVGIPNSFI).

It belongs to the PsbZ family. In terms of assembly, PSII is composed of 1 copy each of membrane proteins PsbA, PsbB, PsbC, PsbD, PsbE, PsbF, PsbH, PsbI, PsbJ, PsbK, PsbL, PsbM, PsbT, PsbY, PsbZ, Psb30/Ycf12, at least 3 peripheral proteins of the oxygen-evolving complex and a large number of cofactors. It forms dimeric complexes.

It is found in the plastid. The protein localises to the chloroplast thylakoid membrane. In terms of biological role, may control the interaction of photosystem II (PSII) cores with the light-harvesting antenna, regulates electron flow through the 2 photosystem reaction centers. PSII is a light-driven water plastoquinone oxidoreductase, using light energy to abstract electrons from H(2)O, generating a proton gradient subsequently used for ATP formation. This Adiantum capillus-veneris (Maidenhair fern) protein is Photosystem II reaction center protein Z.